The primary structure comprises 443 residues: ATP-dependent protease ATPase subunit HslU (443 aa).

ATP is bound by residues isoleucine 18, 60–65 (GVGKTE), aspartate 256, glutamate 321, and arginine 393.

It belongs to the ClpX chaperone family. HslU subfamily. A double ring-shaped homohexamer of HslV is capped on each side by a ring-shaped HslU homohexamer. The assembly of the HslU/HslV complex is dependent on binding of ATP.

The protein resides in the cytoplasm. In terms of biological role, ATPase subunit of a proteasome-like degradation complex; this subunit has chaperone activity. The binding of ATP and its subsequent hydrolysis by HslU are essential for unfolding of protein substrates subsequently hydrolyzed by HslV. HslU recognizes the N-terminal part of its protein substrates and unfolds these before they are guided to HslV for hydrolysis. In Histophilus somni (strain 2336) (Haemophilus somnus), this protein is ATP-dependent protease ATPase subunit HslU.